Consider the following 141-residue polypeptide: Aspartate 1-decarboxylase 1 (141 aa).

S25 (schiff-base intermediate with substrate; via pyruvic acid) is an active-site residue. The residue at position 25 (S25) is a Pyruvic acid (Ser). T57 provides a ligand contact to substrate. Y58 (proton donor) is an active-site residue. 73 to 75 (GPA) lines the substrate pocket.

The protein belongs to the PanD family. Heterooctamer of four alpha and four beta subunits. It depends on pyruvate as a cofactor. Post-translationally, is synthesized initially as an inactive proenzyme, which is activated by self-cleavage at a specific serine bond to produce a beta-subunit with a hydroxyl group at its C-terminus and an alpha-subunit with a pyruvoyl group at its N-terminus.

The protein localises to the cytoplasm. The catalysed reaction is L-aspartate + H(+) = beta-alanine + CO2. The protein operates within cofactor biosynthesis; (R)-pantothenate biosynthesis; beta-alanine from L-aspartate: step 1/1. Catalyzes the pyruvoyl-dependent decarboxylation of aspartate to produce beta-alanine. The sequence is that of Aspartate 1-decarboxylase 1 from Paenarthrobacter aurescens (strain TC1).